A 218-amino-acid polypeptide reads, in one-letter code: Cytochrome b6 (218 aa).

The helical transmembrane segment at 35 to 55 (IFYCLGGITLVCFLIQFATGF) threads the bilayer. Position 38 (C38) interacts with heme c. Residues H89 and H103 each coordinate heme b. 3 helical membrane passes run 93 to 113 (ASMM…TGGF), 119 to 139 (LTWV…VTGY), and 189 to 209 (LHTF…FLMI). Residues H190 and H205 each contribute to the heme b site.

This sequence belongs to the cytochrome b family. PetB subfamily. As to quaternary structure, the 4 large subunits of the cytochrome b6-f complex are cytochrome b6, subunit IV (17 kDa polypeptide, PetD), cytochrome f and the Rieske protein, while the 4 small subunits are PetG, PetL, PetM and PetN. The complex functions as a dimer. It depends on heme b as a cofactor. Requires heme c as cofactor.

It is found in the cellular thylakoid membrane. Functionally, component of the cytochrome b6-f complex, which mediates electron transfer between photosystem II (PSII) and photosystem I (PSI), cyclic electron flow around PSI, and state transitions. The chain is Cytochrome b6 from Prochlorococcus marinus (strain MIT 9515).